The chain runs to 1132 residues: Phospholipid-transporting ATPase IG (1132 aa).

The Cytoplasmic segment spans residues Met1–Gln66. The helical transmembrane segment at Phe67 to Val85 threads the bilayer. Position 86 (Asp86) is a topological domain, extracellular. Residues Thr87–Ile107 traverse the membrane as a helical segment. Over Lys108 to Ser290 the chain is Cytoplasmic. The helical transmembrane segment at Ile291–Thr311 threads the bilayer. The Extracellular portion of the chain corresponds to Leu312–Asp346. A helical transmembrane segment spans residues Phe347 to Glu367. Topologically, residues Met368 to Tyr879 are cytoplasmic. The active-site 4-aspartylphosphate intermediate is Asp412. ATP is bound by residues Asp412, Lys413, and Thr414. Asp412 contacts Mg(2+). Thr414 serves as a coordination point for Mg(2+). Ser445 is subject to Phosphoserine. Residues Glu501, Phe543, Lys566, Arg597, Thr677, Gly678, Asp679, Arg792, and Lys798 each coordinate ATP. Position 819 (Asp819) interacts with Mg(2+). ATP-binding residues include Asn822 and Asp823. Asp823 contacts Mg(2+). The helical transmembrane segment at Phe880–Phe900 threads the bilayer. Residues Ser901–Ala908 lie on the Extracellular side of the membrane. A helical membrane pass occupies residues Ala909–Leu929. Over Glu930–Gln955 the chain is Cytoplasmic. The chain crosses the membrane as a helical span at residues Leu956–Gly976. At Thr977 to Asn995 the chain is on the extracellular side. A helical transmembrane segment spans residues Trp996–Leu1016. The Cytoplasmic segment spans residues Asp1017 to His1026. The helical transmembrane segment at Phe1027–Ile1047 threads the bilayer. Over Trp1048–Thr1069 the chain is Extracellular. The helical transmembrane segment at Trp1070 to Leu1090 threads the bilayer. At Lys1091–Leu1132 the chain is on the cytoplasmic side. Ser1108, Ser1116, and Ser1126 each carry phosphoserine. A Di-leucine motif motif is present at residues Ser1116–Leu1121.

It belongs to the cation transport ATPase (P-type) (TC 3.A.3) family. Type IV subfamily. Component of a P4-ATPase flippase complex which consists of a catalytic alpha subunit ATP11C and an accessory beta subunit TMEM30A. Requires Mg(2+) as cofactor. In terms of processing, proteolytically cleaved by CASP3, CASP6 and CASP7. Phosphorylated at Ser-1116 likely by PRKCA; this creates a functional di-leucine motif that is sufficient for endocytosis. Widely expressed.

The protein localises to the cell membrane. It localises to the endoplasmic reticulum membrane. It is found in the early endosome membrane. The protein resides in the recycling endosome membrane. The enzyme catalyses ATP + H2O + phospholipidSide 1 = ADP + phosphate + phospholipidSide 2.. The catalysed reaction is a 1,2-diacyl-sn-glycero-3-phospho-L-serine(out) + ATP + H2O = a 1,2-diacyl-sn-glycero-3-phospho-L-serine(in) + ADP + phosphate + H(+). It catalyses the reaction a 1,2-diacyl-sn-glycero-3-phosphoethanolamine(out) + ATP + H2O = a 1,2-diacyl-sn-glycero-3-phosphoethanolamine(in) + ADP + phosphate + H(+). The flippase activity is inactivated by caspase-mediated cleavage in apoptotic cells, allowing for PS exposure on the cell surface and engulfment of apoptotic cells by macrophages. The ATPase activity is up-regulated by aminophospholipids PS and PE and down-regulated by Increasing intracellular Ca2+ levels. Its function is as follows. Catalytic component of a P4-ATPase flippase complex which catalyzes the hydrolysis of ATP coupled to the transport of aminophospholipids, phosphatidylserines (PS) and phosphatidylethanolamines (PE), from the outer to the inner leaflet of the plasma membrane. Major PS-flippase in immune cell subsets. In erythrocyte plasma membrane, it is required to maintain PS in the inner leaflet preventing its exposure on the surface. This asymmetric distribution is critical for the survival of erythrocytes in circulation since externalized PS is a phagocytic signal for erythrocyte clearance by splenic macrophages. Required for B cell differentiation past the pro-B cell stage. Seems to mediate PS flipping in pro-B cells. May be involved in the transport of cholestatic bile acids. The sequence is that of Phospholipid-transporting ATPase IG from Homo sapiens (Human).